Here is a 246-residue protein sequence, read N- to C-terminus: Small ribosomal subunit protein uS2 (246 aa).

It belongs to the universal ribosomal protein uS2 family.

The protein is Small ribosomal subunit protein uS2 of Helicobacter acinonychis (strain Sheeba).